Reading from the N-terminus, the 105-residue chain is Small ribosomal subunit protein uS10 (105 aa).

It belongs to the universal ribosomal protein uS10 family. As to quaternary structure, part of the 30S ribosomal subunit.

Involved in the binding of tRNA to the ribosomes. This is Small ribosomal subunit protein uS10 from Anaplasma phagocytophilum (strain HZ).